We begin with the raw amino-acid sequence, 335 residues long: Phosphate acyltransferase (335 aa).

Belongs to the PlsX family. Homodimer. Probably interacts with PlsY.

The protein resides in the cytoplasm. It carries out the reaction a fatty acyl-[ACP] + phosphate = an acyl phosphate + holo-[ACP]. Its pathway is lipid metabolism; phospholipid metabolism. Functionally, catalyzes the reversible formation of acyl-phosphate (acyl-PO(4)) from acyl-[acyl-carrier-protein] (acyl-ACP). This enzyme utilizes acyl-ACP as fatty acyl donor, but not acyl-CoA. In Streptococcus pyogenes serotype M6 (strain ATCC BAA-946 / MGAS10394), this protein is Phosphate acyltransferase.